Here is a 448-residue protein sequence, read N- to C-terminus: Methylenetetrahydrofolate--tRNA-(uracil-5-)-methyltransferase TrmFO (448 aa).

An FAD-binding site is contributed by 13–18 (GAGLAG).

It belongs to the MnmG family. TrmFO subfamily. FAD is required as a cofactor.

It localises to the cytoplasm. The catalysed reaction is uridine(54) in tRNA + (6R)-5,10-methylene-5,6,7,8-tetrahydrofolate + NADH + H(+) = 5-methyluridine(54) in tRNA + (6S)-5,6,7,8-tetrahydrofolate + NAD(+). It carries out the reaction uridine(54) in tRNA + (6R)-5,10-methylene-5,6,7,8-tetrahydrofolate + NADPH + H(+) = 5-methyluridine(54) in tRNA + (6S)-5,6,7,8-tetrahydrofolate + NADP(+). Catalyzes the folate-dependent formation of 5-methyl-uridine at position 54 (M-5-U54) in all tRNAs. This is Methylenetetrahydrofolate--tRNA-(uracil-5-)-methyltransferase TrmFO from Streptococcus pyogenes serotype M4 (strain MGAS10750).